A 310-amino-acid polypeptide reads, in one-letter code: MRTHDDTWDIRTSVGATAVMVAAARAVETSKPEPLIRDPYARMLVTNANAGVIWEAMLDQEMVAKVEAIDAETAATVEHMRSYQAVRTNFFDTYFADAVAAGIRQVVILASGLDSRAYRLDWPAGTTVYEIDQPQVLAYKSATLAENGVTPAAERREVAIDLRQDWPSALRAAGFDPSARTAWLAEGLLMYLPAEAQDRLFTQIGELSCAGSRIAAETAGNHADERREQMRERFRKVAQTLGLEQTIDVHELIYHDPDRAPLGQWLNEHGWRANAQNACDEMHRVGRWVEGVPMADDKQAYSDFVTAERL.

Residues aspartate 132 and aspartate 161 to leucine 162 each bind S-adenosyl-L-methionine.

It belongs to the UPF0677 family.

Functionally, exhibits S-adenosyl-L-methionine-dependent methyltransferase activity. The protein is Putative S-adenosyl-L-methionine-dependent methyltransferase MUL_4762 of Mycobacterium ulcerans (strain Agy99).